The primary structure comprises 434 residues: 4-hydroxy-3-methylbut-2-en-1-yl diphosphate synthase (flavodoxin) (434 aa).

Polar residues predominate over residues 1–15 (MQSEAQSPRSSQICS). The segment at 1 to 24 (MQSEAQSPRSSQICSTEPVFGGHQ) is disordered. Positions 322, 325, 368, and 375 each coordinate [4Fe-4S] cluster.

Belongs to the IspG family. The cofactor is [4Fe-4S] cluster.

The catalysed reaction is (2E)-4-hydroxy-3-methylbut-2-enyl diphosphate + oxidized [flavodoxin] + H2O + 2 H(+) = 2-C-methyl-D-erythritol 2,4-cyclic diphosphate + reduced [flavodoxin]. It participates in isoprenoid biosynthesis; isopentenyl diphosphate biosynthesis via DXP pathway; isopentenyl diphosphate from 1-deoxy-D-xylulose 5-phosphate: step 5/6. In terms of biological role, converts 2C-methyl-D-erythritol 2,4-cyclodiphosphate (ME-2,4cPP) into 1-hydroxy-2-methyl-2-(E)-butenyl 4-diphosphate. This is 4-hydroxy-3-methylbut-2-en-1-yl diphosphate synthase (flavodoxin) from Burkholderia ambifaria (strain MC40-6).